The following is a 74-amino-acid chain: Conotoxin VxVIA (74 aa).

The first 22 residues, 1 to 22 (MKLTCVLIIAVLFLTAYQLATA), serve as a signal peptide directing secretion. The propeptide occupies 23 to 47 (ASHAKGKQKHRALRPADKHFRFTKR). 3 disulfide bridges follow: cysteine 48-cysteine 62, cysteine 55-cysteine 66, and cysteine 61-cysteine 73.

As to expression, expressed by the venom duct.

Its subcellular location is the secreted. In terms of biological role, when injected intracranially in mice, induces a series of symptoms such as quivering, climbing, scratching, barrel rolling and paralysis of limbs. Unexpectedly, no effect is observed on ionic currents when tested on locust DUM neuron. The sequence is that of Conotoxin VxVIA from Conus vexillum (Flag cone).